The chain runs to 763 residues: 5-methyltetrahydropteroyltriglutamate--homocysteine methyltransferase (763 aa).

5-methyltetrahydropteroyltri-L-glutamate-binding positions include 16–19 (RELK) and Lys114. Residues 438–440 (IGS) and Glu491 each bind L-homocysteine. L-methionine contacts are provided by residues 438 to 440 (IGS) and Glu491. 5-methyltetrahydropteroyltri-L-glutamate is bound by residues 522 to 523 (RC) and Trp568. Asp606 provides a ligand contact to L-homocysteine. Residue Asp606 participates in L-methionine binding. Glu612 provides a ligand contact to 5-methyltetrahydropteroyltri-L-glutamate. The Zn(2+) site is built by His648, Cys650, and Glu672. His701 functions as the Proton donor in the catalytic mechanism. Zn(2+) is bound at residue Cys733.

The protein belongs to the vitamin-B12 independent methionine synthase family. It depends on Zn(2+) as a cofactor.

The enzyme catalyses 5-methyltetrahydropteroyltri-L-glutamate + L-homocysteine = tetrahydropteroyltri-L-glutamate + L-methionine. It participates in amino-acid biosynthesis; L-methionine biosynthesis via de novo pathway; L-methionine from L-homocysteine (MetE route): step 1/1. Catalyzes the transfer of a methyl group from 5-methyltetrahydrofolate to homocysteine resulting in methionine formation. In Parvibaculum lavamentivorans (strain DS-1 / DSM 13023 / NCIMB 13966), this protein is 5-methyltetrahydropteroyltriglutamate--homocysteine methyltransferase.